The chain runs to 275 residues: Formamidopyrimidine-DNA glycosylase (275 aa).

The Schiff-base intermediate with DNA role is filled by P2. E3 acts as the Proton donor in catalysis. The active-site Proton donor; for beta-elimination activity is the K59. Positions 92, 111, and 155 each coordinate DNA. The segment at 240-274 (NVYGRAGKACPKCGTTIEKQVLGQRSSYYCPQCQR) adopts an FPG-type zinc-finger fold. Residue R264 is the Proton donor; for delta-elimination activity of the active site.

The protein belongs to the FPG family. Monomer. The cofactor is Zn(2+).

It catalyses the reaction Hydrolysis of DNA containing ring-opened 7-methylguanine residues, releasing 2,6-diamino-4-hydroxy-5-(N-methyl)formamidopyrimidine.. It carries out the reaction 2'-deoxyribonucleotide-(2'-deoxyribose 5'-phosphate)-2'-deoxyribonucleotide-DNA = a 3'-end 2'-deoxyribonucleotide-(2,3-dehydro-2,3-deoxyribose 5'-phosphate)-DNA + a 5'-end 5'-phospho-2'-deoxyribonucleoside-DNA + H(+). Functionally, involved in base excision repair of DNA damaged by oxidation or by mutagenic agents. Acts as a DNA glycosylase that recognizes and removes damaged bases. Has a preference for oxidized purines, such as 7,8-dihydro-8-oxoguanine (8-oxoG). Has AP (apurinic/apyrimidinic) lyase activity and introduces nicks in the DNA strand. Cleaves the DNA backbone by beta-delta elimination to generate a single-strand break at the site of the removed base with both 3'- and 5'-phosphates. The polypeptide is Formamidopyrimidine-DNA glycosylase (Magnetococcus marinus (strain ATCC BAA-1437 / JCM 17883 / MC-1)).